Here is a 477-residue protein sequence, read N- to C-terminus: Ribulose bisphosphate carboxylase large chain (477 aa).

A propeptide spanning residues 1–2 (MS) is cleaved from the precursor. The residue at position 3 (proline 3) is an N-acetylproline. At lysine 14 the chain carries N6,N6,N6-trimethyllysine. Positions 123 and 173 each coordinate substrate. The active-site Proton acceptor is lysine 175. Lysine 177 is a binding site for substrate. Lysine 201, aspartate 203, and glutamate 204 together coordinate Mg(2+). Lysine 201 carries the post-translational modification N6-carboxylysine. Catalysis depends on histidine 294, which acts as the Proton acceptor. Positions 295, 327, and 379 each coordinate substrate.

It belongs to the RuBisCO large chain family. Type I subfamily. In terms of assembly, heterohexadecamer of 8 large chains and 8 small chains; disulfide-linked. The disulfide link is formed within the large subunit homodimers. Mg(2+) is required as a cofactor. The disulfide bond which can form in the large chain dimeric partners within the hexadecamer appears to be associated with oxidative stress and protein turnover.

The protein resides in the plastid. It is found in the chloroplast. The enzyme catalyses 2 (2R)-3-phosphoglycerate + 2 H(+) = D-ribulose 1,5-bisphosphate + CO2 + H2O. It carries out the reaction D-ribulose 1,5-bisphosphate + O2 = 2-phosphoglycolate + (2R)-3-phosphoglycerate + 2 H(+). Its function is as follows. RuBisCO catalyzes two reactions: the carboxylation of D-ribulose 1,5-bisphosphate, the primary event in carbon dioxide fixation, as well as the oxidative fragmentation of the pentose substrate in the photorespiration process. Both reactions occur simultaneously and in competition at the same active site. This is Ribulose bisphosphate carboxylase large chain from Digitalis purpurea (Common foxglove).